A 337-amino-acid chain; its full sequence is uncharacterized protein (337 aa).

The region spanning 279 to 337 (SIVAKRNIKKGEYLSVDNISFKRPGRGIETKYLSIILNRKIKNDKEEDDIIYWDDLLGD) is the AFP-like domain.

This sequence to B.subtilis SpsE.

This is an uncharacterized protein from Methanocaldococcus jannaschii (strain ATCC 43067 / DSM 2661 / JAL-1 / JCM 10045 / NBRC 100440) (Methanococcus jannaschii).